A 321-amino-acid chain; its full sequence is GTP cyclohydrolase FolE2 (321 aa).

This sequence belongs to the GTP cyclohydrolase IV family.

The catalysed reaction is GTP + H2O = 7,8-dihydroneopterin 3'-triphosphate + formate + H(+). The protein operates within cofactor biosynthesis; 7,8-dihydroneopterin triphosphate biosynthesis; 7,8-dihydroneopterin triphosphate from GTP: step 1/1. Converts GTP to 7,8-dihydroneopterin triphosphate. The chain is GTP cyclohydrolase FolE2 from Paracoccus denitrificans (strain Pd 1222).